Reading from the N-terminus, the 475-residue chain is Divinyl ether synthase CYP74M1 (475 aa).

Cysteine 427 serves as a coordination point for heme.

Belongs to the cytochrome P450 family. The cofactor is heme.

The enzyme catalyses (13S)-hydroperoxy-(9Z,11E)-octadecadienoate = etheroleate + H2O. The catalysed reaction is (13S)-hydroperoxy-(9Z,11E,15Z)-octadecatrienoate = etherolenate + H2O. It functions in the pathway lipid metabolism; oxylipin biosynthesis. Divinyl ether synthase involved in oxylipin biosynthesis. Catalyzes the conversion of (13S)-hydroperoxy-(9Z,11E)-octadecadienoate (13-HPOD) to etheroleate and (13S)-hydroperoxy-(9Z,11E,15Z)-octadecatrienoate (13-HPOT) to etherolenate. Has no activity with the corresponding 9-hydroperoxides (9-HPOD and 9-HPOT). The chain is Divinyl ether synthase CYP74M1 from Selaginella moellendorffii (Spikemoss).